Here is a 253-residue protein sequence, read N- to C-terminus: MADRADKAARSSVDPGEIARFSAMAAEWWDPAGKFRPLHKFNPTRLSYIRERTSAHFGLDARAVRPFEDLRFLDIGCGGGLLSEPMARLGAAMVSADASEQNIKTASVHAAEQGLGIDYRCTTAEALAAAGETFDVILNMEVIEHVADPMAFLKDCASMLRPGGLMFIATLNRTLKAHAFAIVGAEYVLGWLPRGTHDWKKFITVNEMETGIADAGLRLKELTGVSYNPLTDKWSLSRDTDVNYMALAERARD.

S-adenosyl-L-methionine is bound by residues Arg-45, Gly-76, Asp-97, and Met-140.

Belongs to the methyltransferase superfamily. UbiG/COQ3 family.

It carries out the reaction a 3-demethylubiquinol + S-adenosyl-L-methionine = a ubiquinol + S-adenosyl-L-homocysteine + H(+). It catalyses the reaction a 3-(all-trans-polyprenyl)benzene-1,2-diol + S-adenosyl-L-methionine = a 2-methoxy-6-(all-trans-polyprenyl)phenol + S-adenosyl-L-homocysteine + H(+). It functions in the pathway cofactor biosynthesis; ubiquinone biosynthesis. O-methyltransferase that catalyzes the 2 O-methylation steps in the ubiquinone biosynthetic pathway. This Parvibaculum lavamentivorans (strain DS-1 / DSM 13023 / NCIMB 13966) protein is Ubiquinone biosynthesis O-methyltransferase.